Consider the following 156-residue polypeptide: Succinate dehydrogenase assembly factor 2-B, mitochondrial (156 aa).

The N-terminal 24 residues, 1 to 24 (MLRQFIVSTVGRRLQLPMMAQSRL), are a transit peptide targeting the mitochondrion.

It belongs to the SDHAF2 family. Interacts with the flavoprotein subunit within the SDH catalytic dimer.

It is found in the mitochondrion matrix. Plays an essential role in the assembly of succinate dehydrogenase (SDH), an enzyme complex (also referred to as respiratory complex II) that is a component of both the tricarboxylic acid (TCA) cycle and the mitochondrial electron transport chain, and which couples the oxidation of succinate to fumarate with the reduction of ubiquinone (coenzyme Q) to ubiquinol. Required for flavinylation (covalent attachment of FAD) of the flavoprotein subunit of the SDH catalytic dimer. The polypeptide is Succinate dehydrogenase assembly factor 2-B, mitochondrial (Drosophila simulans (Fruit fly)).